We begin with the raw amino-acid sequence, 40 residues long: Photosystem II reaction center protein J (40 aa).

The helical transmembrane segment at 8-28 (IPLWLIGTVAGIPVIGLVGVF) threads the bilayer.

The protein belongs to the PsbJ family. PSII is composed of 1 copy each of membrane proteins PsbA, PsbB, PsbC, PsbD, PsbE, PsbF, PsbH, PsbI, PsbJ, PsbK, PsbL, PsbM, PsbT, PsbX, PsbY, PsbZ, Psb30/Ycf12, at least 3 peripheral proteins of the oxygen-evolving complex and a large number of cofactors. It forms dimeric complexes.

The protein resides in the plastid. It is found in the chloroplast thylakoid membrane. One of the components of the core complex of photosystem II (PSII). PSII is a light-driven water:plastoquinone oxidoreductase that uses light energy to abstract electrons from H(2)O, generating O(2) and a proton gradient subsequently used for ATP formation. It consists of a core antenna complex that captures photons, and an electron transfer chain that converts photonic excitation into a charge separation. The chain is Photosystem II reaction center protein J from Hordeum jubatum (Foxtail barley).